Reading from the N-terminus, the 198-residue chain is MAEEFLNTHNASILLSAANKSHYPQDDLPEVALAGRSNVGKSSFINTLLGRKNLARTSSKPGKTQLLNFYNIDDKLRFVDVPGYGYAKVSKTERAKWGKMIEEYLVTRDNLRVVVSLVDFRHDPSADDIQMYEFLKYYEIPVIIVATKADKIPRGKWNKHESSIKKKLNFDKKDHFIVFSSVDRTGLDESWDTILSEL.

The EngB-type G domain maps to Asp27–Leu198. GTP is bound by residues Gly35 to Ser42, Gly62 to Leu66, Asp80 to Gly83, Thr147 to Asp150, and Phe179 to Ser181. Mg(2+)-binding residues include Ser42 and Thr64.

This sequence belongs to the TRAFAC class TrmE-Era-EngA-EngB-Septin-like GTPase superfamily. EngB GTPase family. Mg(2+) is required as a cofactor.

Necessary for normal cell division and for the maintenance of normal septation. The sequence is that of Probable GTP-binding protein EngB from Streptococcus agalactiae serotype Ia (strain ATCC 27591 / A909 / CDC SS700).